The chain runs to 279 residues: Large ribosomal subunit protein uL2 (279 aa).

The segment at 223–279 (VVMNPVDHPHGGGEGRTSGGRHPVSPWGQPTKGYKTRRSARPSDKFIVQKRKRNRNR) is disordered. A compositionally biased stretch (basic residues) spans 270 to 279 (VQKRKRNRNR).

It belongs to the universal ribosomal protein uL2 family. Part of the 50S ribosomal subunit. Forms a bridge to the 30S subunit in the 70S ribosome.

In terms of biological role, one of the primary rRNA binding proteins. Required for association of the 30S and 50S subunits to form the 70S ribosome, for tRNA binding and peptide bond formation. It has been suggested to have peptidyltransferase activity; this is somewhat controversial. Makes several contacts with the 16S rRNA in the 70S ribosome. In Leptospira borgpetersenii serovar Hardjo-bovis (strain JB197), this protein is Large ribosomal subunit protein uL2.